The chain runs to 476 residues: ATP synthase subunit beta, chloroplastic (476 aa).

156 to 163 (GGAGVGKT) is a binding site for ATP.

It belongs to the ATPase alpha/beta chains family. As to quaternary structure, F-type ATPases have 2 components, CF(1) - the catalytic core - and CF(0) - the membrane proton channel. CF(1) has five subunits: alpha(3), beta(3), gamma(1), delta(1), epsilon(1). CF(0) has four main subunits: a(1), b(1), b'(1) and c(9-12).

The protein localises to the plastid. It is found in the chloroplast thylakoid membrane. It catalyses the reaction ATP + H2O + 4 H(+)(in) = ADP + phosphate + 5 H(+)(out). Functionally, produces ATP from ADP in the presence of a proton gradient across the membrane. The catalytic sites are hosted primarily by the beta subunits. The polypeptide is ATP synthase subunit beta, chloroplastic (Fucus vesiculosus (Bladder wrack)).